The primary structure comprises 468 residues: UDP-N-acetylmuramate--L-alanine ligase (468 aa).

116 to 122 (GTHGKTT) contacts ATP.

It belongs to the MurCDEF family.

The protein localises to the cytoplasm. It carries out the reaction UDP-N-acetyl-alpha-D-muramate + L-alanine + ATP = UDP-N-acetyl-alpha-D-muramoyl-L-alanine + ADP + phosphate + H(+). The protein operates within cell wall biogenesis; peptidoglycan biosynthesis. Cell wall formation. The polypeptide is UDP-N-acetylmuramate--L-alanine ligase (Fusobacterium nucleatum subsp. nucleatum (strain ATCC 25586 / DSM 15643 / BCRC 10681 / CIP 101130 / JCM 8532 / KCTC 2640 / LMG 13131 / VPI 4355)).